Consider the following 227-residue polypeptide: Venom allergen 5 (227 aa).

An N-terminal signal peptide occupies residues 1–21 (MKISCLICLVIVLTIIHLSQA). 4 cysteine pairs are disulfide-bonded: Cys25-Cys37, Cys29-Cys125, Cys49-Cys117, and Cys193-Cys210. An SCP domain is found at 69 to 212 (EEHNRFRQKV…MQIHYLICNY (144 aa)).

It belongs to the CRISP family. Venom allergen 5-like subfamily. In terms of tissue distribution, expressed by the venom gland.

Its subcellular location is the secreted. This chain is Venom allergen 5, found in Polistes dominula (European paper wasp).